Consider the following 276-residue polypeptide: MPLHMIPQVAHAMVRAAATGRLTLYTKTRTETTNLDHAEYVTCGRYTICAFCLTTLAPHANVKTIQDSHACSRQPNEAIRSLVEVSDKAQIALVGSRTVDYHELDVKAGFVAPTADETVAPSKDIVELPFRTCDLDDSSATACVRNHCQAGHDGVTHLPILSGDFKLPNEHPTKPLDDTHPHDKVLTRCPKTGLLLVHDTHAHATAVVATAATRAILMHDLLTSANVDDGHQARSACYGPTFSNLTFACHSTCASDMAHFDCGQIVGIDLHVEPSD.

The protein belongs to the aquareoviridae outer capsid VP7 protein family. Interacts with VP4 and VP6.

It is found in the virion. Its function is as follows. Interacts with VP4 to form the outer icosahedral capsid with an incomplete T=13 symmetry, about 80 nm in diameter, and consisting of 200 VP4-VP7 trimers. This chain is Outer capsid protein VP7 (S10), found in Notemigonus crysoleucas (Golden shiner).